Reading from the N-terminus, the 192-residue chain is Peptidyl-tRNA hydrolase (192 aa).

Tyr17 serves as a coordination point for tRNA. His22 functions as the Proton acceptor in the catalytic mechanism. Residues Phe68, Asn70, and Asn116 each contribute to the tRNA site.

Belongs to the PTH family. In terms of assembly, monomer.

The protein resides in the cytoplasm. The catalysed reaction is an N-acyl-L-alpha-aminoacyl-tRNA + H2O = an N-acyl-L-amino acid + a tRNA + H(+). In terms of biological role, hydrolyzes ribosome-free peptidyl-tRNAs (with 1 or more amino acids incorporated), which drop off the ribosome during protein synthesis, or as a result of ribosome stalling. Functionally, catalyzes the release of premature peptidyl moieties from peptidyl-tRNA molecules trapped in stalled 50S ribosomal subunits, and thus maintains levels of free tRNAs and 50S ribosomes. In Buchnera aphidicola subsp. Cinara cedri (strain Cc), this protein is Peptidyl-tRNA hydrolase.